The chain runs to 390 residues: Monomeric sarcosine oxidase (390 aa).

6-36 (DVIVVGAGSMGMAAGYQLAKQGVKTLLVDAF) is an FAD binding site. At Cys-316 the chain carries S-8alpha-FAD cysteine.

In terms of assembly, monomer. Requires FAD as cofactor.

The protein localises to the cytoplasm. It carries out the reaction sarcosine + O2 + H2O = formaldehyde + glycine + H2O2. Its activity is regulated as follows. Pyrrole-2-carboxylate is a competitive inhibitor. N-(cyclopropyl)glycine (CPG) is a mechanism-based inhibitor and inactivates the enzyme by covalently modifying the flavin. In terms of biological role, catalyzes the oxidative demethylation of sarcosine. Can also oxidize other secondary amino acids such as N-methyl-L-alanine. The polypeptide is Monomeric sarcosine oxidase (soxA) (Bacillus sp. (strain B-0618)).